A 323-amino-acid chain; its full sequence is ATP synthase gamma chain (323 aa).

This sequence belongs to the ATPase gamma chain family. F-type ATPases have 2 components, CF(1) - the catalytic core - and CF(0) - the membrane proton channel. CF(1) has five subunits: alpha(3), beta(3), gamma(1), delta(1), epsilon(1). CF(0) has three main subunits: a, b and c.

It is found in the cell inner membrane. Its function is as follows. Produces ATP from ADP in the presence of a proton gradient across the membrane. The gamma chain is believed to be important in regulating ATPase activity and the flow of protons through the CF(0) complex. The chain is ATP synthase gamma chain from Rickettsia peacockii (strain Rustic).